Consider the following 78-residue polypeptide: U-scoloptoxin(04)-Er1e (78 aa).

Residues 1–24 (MTRHLIFAAMLLVCLFVCWNAVGA) form the signal peptide. A propeptide spanning residues 25–28 (RDAR) is cleaved from the precursor.

Belongs to the scoloptoxin-04 family. Post-translationally, contains 2 disulfide bonds. In terms of tissue distribution, expressed by the venom gland.

It is found in the secreted. The sequence is that of U-scoloptoxin(04)-Er1e from Ethmostigmus rubripes (Giant centipede).